A 155-amino-acid polypeptide reads, in one-letter code: Small ribosomal subunit protein uS17 (155 aa).

It belongs to the universal ribosomal protein uS17 family. Component of the small ribosomal subunit. Mature ribosomes consist of a small (40S) and a large (60S) subunit. The 40S subunit contains about 32 different proteins and 1 molecule of RNA (18S). The 60S subunit contains 45 different proteins and 3 molecules of RNA (25S, 5.8S and 5S).

It is found in the cytoplasm. Its function is as follows. Component of the ribosome, a large ribonucleoprotein complex responsible for the synthesis of proteins in the cell. The small ribosomal subunit (SSU) binds messenger RNAs (mRNAs) and translates the encoded message by selecting cognate aminoacyl-transfer RNA (tRNA) molecules. The large subunit (LSU) contains the ribosomal catalytic site termed the peptidyl transferase center (PTC), which catalyzes the formation of peptide bonds, thereby polymerizing the amino acids delivered by tRNAs into a polypeptide chain. The nascent polypeptides leave the ribosome through a tunnel in the LSU and interact with protein factors that function in enzymatic processing, targeting, and the membrane insertion of nascent chains at the exit of the ribosomal tunnel. The protein is Small ribosomal subunit protein uS17 of Candida albicans (strain SC5314 / ATCC MYA-2876) (Yeast).